We begin with the raw amino-acid sequence, 125 residues long: Putative iron-sulfur cluster insertion protein ErpA 2 (125 aa).

Positions 53, 117, and 119 each coordinate iron-sulfur cluster.

This sequence belongs to the HesB/IscA family. Homodimer. It depends on iron-sulfur cluster as a cofactor.

Functionally, required for insertion of 4Fe-4S clusters. The polypeptide is Putative iron-sulfur cluster insertion protein ErpA 2 (Polaromonas naphthalenivorans (strain CJ2)).